Consider the following 464-residue polypeptide: Vitamin D3 hydroxylase-associated protein (464 aa).

Active-site charge relay system residues include Lys-150 and Ser-225. Ser-249 acts as the Acyl-ester intermediate in catalysis.

This sequence belongs to the amidase family. Kidney.

Its subcellular location is the mitochondrion inner membrane. Its function is as follows. May have a vitamin D3 hydroxylase regulatory function. This is Vitamin D3 hydroxylase-associated protein from Gallus gallus (Chicken).